Consider the following 104-residue polypeptide: uncharacterized protein (104 aa).

The signal sequence occupies residues 1–25 (MVSSFFMASTLLAISSCFNSSISRA). Residues 79–99 (IPVVIVVEISSTLVLLLSAFL) form a helical membrane-spanning segment.

The protein localises to the membrane. This is an uncharacterized protein from Saccharomyces cerevisiae (strain ATCC 204508 / S288c) (Baker's yeast).